A 321-amino-acid chain; its full sequence is uncharacterized protein (321 aa).

Val2 carries the post-translational modification N-acetylvaline. The tract at residues 37–63 (SEASRLLTPQTSSNHALSKMQKDDDIR) is disordered. Over residues 43 to 52 (LTPQTSSNHA) the composition is skewed to polar residues. At Thr44 the chain carries Phosphothreonine. Residues Ser49, Ser69, Ser121, Ser126, Ser129, Ser137, and Ser139 each carry the phosphoserine modification. Disordered stretches follow at residues 115–270 (KKQR…YSIS) and 283–321 (ETLE…AQPQ). Polar residues-rich tracts occupy residues 120–145 (KSIN…TSTD), 153–162 (KYSSSGTPEN), and 178–189 (SYGQMIKNNSNR). Thr159 carries the post-translational modification Phosphothreonine. Residues 204–229 (EIDHTAPEKSEKRQERSGRSFDRQKS) show a composition bias toward basic and acidic residues. Residues 237–253 (LSRSISRGPTKNKTVSP) are compositionally biased toward polar residues. Phosphoserine occurs at positions 238, 240, 242, and 270. The span at 284 to 305 (TLEEEQEDAEKEGVLMEDEGNE) shows a compositional bias: acidic residues. The span at 306-315 (EYTKDLEEAA) shows a compositional bias: basic and acidic residues.

It localises to the cytoplasm. This is an uncharacterized protein from Saccharomyces cerevisiae (strain ATCC 204508 / S288c) (Baker's yeast).